The primary structure comprises 352 residues: Uroporphyrinogen decarboxylase (352 aa).

Substrate is bound by residues 29–33, phenylalanine 48, aspartate 78, tyrosine 154, serine 209, and histidine 322; that span reads RQAGR.

The protein belongs to the uroporphyrinogen decarboxylase family. Homodimer.

Its subcellular location is the cytoplasm. It carries out the reaction uroporphyrinogen III + 4 H(+) = coproporphyrinogen III + 4 CO2. It participates in porphyrin-containing compound metabolism; protoporphyrin-IX biosynthesis; coproporphyrinogen-III from 5-aminolevulinate: step 4/4. In terms of biological role, catalyzes the decarboxylation of four acetate groups of uroporphyrinogen-III to yield coproporphyrinogen-III. In Bacillus pumilus (strain SAFR-032), this protein is Uroporphyrinogen decarboxylase.